The primary structure comprises 84 residues: UPF0297 protein NT01CX_2279 (84 aa).

It belongs to the UPF0297 family.

This Clostridium novyi (strain NT) protein is UPF0297 protein NT01CX_2279.